A 27-amino-acid polypeptide reads, in one-letter code: Toxin Bcg III 21.00 (27 aa).

It localises to the secreted. The protein resides in the nematocyst. Functionally, possible voltage-gated potassium channel (Kv) blocker. The sequence is that of Toxin Bcg III 21.00 from Bunodosoma cangicum (Sea anemone).